A 180-amino-acid polypeptide reads, in one-letter code: Adenine phosphoribosyltransferase (180 aa).

Ser2 bears the N-acetylserine mark. Phosphoserine occurs at positions 4, 15, and 30. A Phosphotyrosine modification is found at Tyr60. The residue at position 66 (Ser66) is a Phosphoserine. Position 114 is an N6-acetyllysine (Lys114). Thr135 is subject to Phosphothreonine.

The protein belongs to the purine/pyrimidine phosphoribosyltransferase family. Homodimer.

It is found in the cytoplasm. The enzyme catalyses AMP + diphosphate = 5-phospho-alpha-D-ribose 1-diphosphate + adenine. The protein operates within purine metabolism; AMP biosynthesis via salvage pathway; AMP from adenine: step 1/1. Its function is as follows. Catalyzes a salvage reaction resulting in the formation of AMP, that is energically less costly than de novo synthesis. The sequence is that of Adenine phosphoribosyltransferase from Rattus norvegicus (Rat).